We begin with the raw amino-acid sequence, 421 residues long: D-amino acid dehydrogenase (421 aa).

Residue Val3 to Tyr17 coordinates FAD.

This sequence belongs to the DadA oxidoreductase family. Requires FAD as cofactor.

It carries out the reaction a D-alpha-amino acid + A + H2O = a 2-oxocarboxylate + AH2 + NH4(+). Its pathway is amino-acid degradation; D-alanine degradation; NH(3) and pyruvate from D-alanine: step 1/1. Its function is as follows. Oxidative deamination of D-amino acids. This chain is D-amino acid dehydrogenase, found in Methylobacterium sp. (strain 4-46).